An 88-amino-acid chain; its full sequence is Putative defensin-like protein 264 (88 aa).

The first 26 residues, M1 to A26, serve as a signal peptide directing secretion. Intrachain disulfides connect C47-C65, C53-C70, and C57-C72.

Belongs to the DEFL family.

It localises to the secreted. This chain is Putative defensin-like protein 264, found in Arabidopsis thaliana (Mouse-ear cress).